The sequence spans 336 residues: Holliday junction branch migration complex subunit RuvB (336 aa).

The tract at residues 1-182 (MKERIVNLET…FGMSFRMQFY (182 aa)) is large ATPase domain (RuvB-L). ATP contacts are provided by residues Leu21, Arg22, Gly63, Lys66, Thr67, Ser68, 129–131 (EDF), Arg172, Tyr182, and Arg219. Thr67 provides a ligand contact to Mg(2+). The segment at 183-253 (SPSELSLIIK…ITLHALNELG (71 aa)) is small ATPAse domain (RuvB-S). The tract at residues 256–336 (ELGFDEADLA…IPTLNPQTLF (81 aa)) is head domain (RuvB-H). The DNA site is built by Arg310 and Arg315.

The protein belongs to the RuvB family. Homohexamer. Forms an RuvA(8)-RuvB(12)-Holliday junction (HJ) complex. HJ DNA is sandwiched between 2 RuvA tetramers; dsDNA enters through RuvA and exits via RuvB. An RuvB hexamer assembles on each DNA strand where it exits the tetramer. Each RuvB hexamer is contacted by two RuvA subunits (via domain III) on 2 adjacent RuvB subunits; this complex drives branch migration. In the full resolvosome a probable DNA-RuvA(4)-RuvB(12)-RuvC(2) complex forms which resolves the HJ.

Its subcellular location is the cytoplasm. The enzyme catalyses ATP + H2O = ADP + phosphate + H(+). In terms of biological role, the RuvA-RuvB-RuvC complex processes Holliday junction (HJ) DNA during genetic recombination and DNA repair, while the RuvA-RuvB complex plays an important role in the rescue of blocked DNA replication forks via replication fork reversal (RFR). RuvA specifically binds to HJ cruciform DNA, conferring on it an open structure. The RuvB hexamer acts as an ATP-dependent pump, pulling dsDNA into and through the RuvAB complex. RuvB forms 2 homohexamers on either side of HJ DNA bound by 1 or 2 RuvA tetramers; 4 subunits per hexamer contact DNA at a time. Coordinated motions by a converter formed by DNA-disengaged RuvB subunits stimulates ATP hydrolysis and nucleotide exchange. Immobilization of the converter enables RuvB to convert the ATP-contained energy into a lever motion, pulling 2 nucleotides of DNA out of the RuvA tetramer per ATP hydrolyzed, thus driving DNA branch migration. The RuvB motors rotate together with the DNA substrate, which together with the progressing nucleotide cycle form the mechanistic basis for DNA recombination by continuous HJ branch migration. Branch migration allows RuvC to scan DNA until it finds its consensus sequence, where it cleaves and resolves cruciform DNA. The polypeptide is Holliday junction branch migration complex subunit RuvB (Helicobacter pylori (strain J99 / ATCC 700824) (Campylobacter pylori J99)).